Here is a 349-residue protein sequence, read N- to C-terminus: Tribbles homolog 3 (349 aa).

Residues methionine 1–leucine 122 form an interaction with DDIT3/CHOP region. The segment at valine 35–valine 57 is disordered. The 248-residue stretch at leucine 63–leucine 310 folds into the Protein kinase domain. A disordered region spans residues valine 317–glycine 349. Positions glutamine 336 to glycine 349 are enriched in acidic residues.

The protein belongs to the protein kinase superfamily. CAMK Ser/Thr protein kinase family. Tribbles subfamily. Interacts with AKT1, AKT2, MAP2K1 and MAP2K7. Interacts with ATF4. Interacts with DDIT3/CHOP and inhibits its interaction with EP300/P300. Interacts with APOBEC3C. Interacts (via N-terminus) with APOBEC3A. Interacts with RELA. Detected only in the lung. Not detected in the heart, brain, spleen, liver, skeletal muscle, kidney and testis.

The protein localises to the nucleus. In terms of biological role, inactive protein kinase which acts as a regulator of the integrated stress response (ISR), a process for adaptation to various stress. Inhibits the transcriptional activity of DDIT3/CHOP and is involved in DDIT3/CHOP-dependent cell death during ER stress. May play a role in programmed neuronal cell death but does not appear to affect non-neuronal cells. Acts as a negative feedback regulator of the ATF4-dependent transcription during the ISR: while TRIB3 expression is promoted by ATF4, TRIB3 protein interacts with ATF4 and inhibits ATF4 transcription activity. Disrupts insulin signaling by binding directly to Akt kinases and blocking their activation. May bind directly to and mask the 'Thr-308' phosphorylation site in AKT1. Interacts with the NF-kappa-B transactivator p65 RELA and inhibits its phosphorylation and thus its transcriptional activation activity. Interacts with MAPK kinases and regulates activation of MAP kinases. Can inhibit APOBEC3A editing of nuclear DNA. This Rattus norvegicus (Rat) protein is Tribbles homolog 3 (Trib3).